A 105-amino-acid chain; its full sequence is Nucleoid-associated protein RPC_4847 (105 aa).

Belongs to the YbaB/EbfC family. Homodimer.

It localises to the cytoplasm. It is found in the nucleoid. Its function is as follows. Binds to DNA and alters its conformation. May be involved in regulation of gene expression, nucleoid organization and DNA protection. The sequence is that of Nucleoid-associated protein RPC_4847 from Rhodopseudomonas palustris (strain BisB18).